The sequence spans 218 residues: Glycerol-3-phosphate acyltransferase (218 aa).

5 consecutive transmembrane segments (helical) span residues 4–24, 54–74, 80–100, 107–127, and 130–150; these read IALG…AILI, TAAI…WLAY, PFYL…PIFF, GVAT…GLMM, and WLLT…SALI.

The protein belongs to the PlsY family. Probably interacts with PlsX.

It localises to the cell inner membrane. It catalyses the reaction an acyl phosphate + sn-glycerol 3-phosphate = a 1-acyl-sn-glycero-3-phosphate + phosphate. It functions in the pathway lipid metabolism; phospholipid metabolism. Functionally, catalyzes the transfer of an acyl group from acyl-phosphate (acyl-PO(4)) to glycerol-3-phosphate (G3P) to form lysophosphatidic acid (LPA). This enzyme utilizes acyl-phosphate as fatty acyl donor, but not acyl-CoA or acyl-ACP. The polypeptide is Glycerol-3-phosphate acyltransferase (Photorhabdus laumondii subsp. laumondii (strain DSM 15139 / CIP 105565 / TT01) (Photorhabdus luminescens subsp. laumondii)).